Here is a 138-residue protein sequence, read N- to C-terminus: Larval cuticle protein 1 (138 aa).

A signal peptide spans 1-16 (MFKFVMVFAVLGVAAA). Residues 49–110 (ADGFDADLLV…PVGAVLPTPP (62 aa)) enclose the Chitin-binding type R&amp;R domain.

Its function is as follows. Component of the larval cuticle. The polypeptide is Larval cuticle protein 1 (Lcp1) (Drosophila miranda (Fruit fly)).